The chain runs to 20 residues: DELTA-actitoxin-Afr1b (20 aa).

This sequence belongs to the actinoporin family. Sea anemone subfamily. As to quaternary structure, octamer or nonamer in membranes. Monomer in the soluble state.

The protein resides in the secreted. It localises to the nematocyst. Its subcellular location is the target cell membrane. Its function is as follows. Pore-forming toxin (PFT) that consists of a crown-shaped octamer or nonamer that forms cation-selective hydrophilic pores of about 1.5 nm (inside) and 13 nm (outside) and causes cytolysis. It causes cardiac stimulation. Also causes hemolysis (HC(50)=0.4 nM). Interestingly, the Phe-16 is crucial for hemolysis. Pore formation is a multi-step process that involves specific recognition of membrane sphingomyelin (but neither cholesterol nor phosphatidylcholine) using aromatic rich region and adjacent phosphocholine (POC) binding site, firm binding to the membrane (mainly driven by hydrophobic interactions) accompanied by the transfer of the N-terminal region to the lipid-water interface and finally pore formation after oligomerization of monomers. It is probable that a dimeric form is an assembly intermediate before the complete oligomerization. The formation of stable pores occurs only in vesicles composed of DOPC/SM (there is no oligomerization when the PFT is treated with vesicles of DOPC or SM alone). The transmembrane pore displays 8 lateral perforations, one at each subunit-subunit interface, partially occupied by the acyl-chain region of a bridging lipid. Each pore contains 24 lipid molecules, firmly bound to each subunit, that is, 3 lipids (L1, L2, L3, L4 and/or L5) are associated to each subunit. Lipid L1 bridges 2 subunits, whereas lipids L2 and L3 bind to sites at single subunit. The sequence is that of DELTA-actitoxin-Afr1b from Actinia fragacea (Strawberry anemone).